Here is a 137-residue protein sequence, read N- to C-terminus: Cellular retinoic acid-binding protein 1 (137 aa).

The Nuclear localization signal signature appears at 21-31 (KALGVNAMLRK). All-trans-retinoate is bound at residue 132–134 (RIY).

It belongs to the calycin superfamily. Fatty-acid binding protein (FABP) family.

It localises to the cytoplasm. In terms of biological role, cytosolic CRABPs may regulate the access of retinoic acid to the nuclear retinoic acid receptors. The chain is Cellular retinoic acid-binding protein 1 (CRABP1) from Homo sapiens (Human).